We begin with the raw amino-acid sequence, 537 residues long: Tyrosine-protein kinase Fyn (537 aa).

Glycine 2 carries N-myristoyl glycine lipidation. 2 S-palmitoyl cysteine lipidation sites follow: cysteine 3 and cysteine 6. Positions leucine 14–threonine 35 are disordered. Residues serine 21 and serine 26 each carry the phosphoserine modification. Residues threonine 82–serine 143 enclose the SH3 domain. Positions tryptophan 149–cysteine 246 constitute an SH2 domain. A Phosphotyrosine modification is found at tyrosine 185. A Protein kinase domain is found at leucine 271 to phenylalanine 524. Residues leucine 277–valine 285 and lysine 299 each bind ATP. Aspartate 390 functions as the Proton acceptor in the catalytic mechanism. Tyrosine 420 carries the phosphotyrosine; by autocatalysis modification. Tyrosine 531 carries the post-translational modification Phosphotyrosine.

This sequence belongs to the protein kinase superfamily. Tyr protein kinase family. SRC subfamily. Interacts (via its SH3 domain) with PIK3R1 and PRMT8. Interacts with FYB1, PAG1, and SH2D1A. Interacts with CD79A (tyrosine-phosphorylated form); the interaction increases FYN activity. Interacts (via SH2 domain) with CSF1R (tyrosine phosphorylated). Interacts with TOM1L1 (phosphorylated form). Interacts with KDR (tyrosine phosphorylated). Interacts (via SH3 domain) with KLHL2 (via N-terminus). Interacts with SH2D1A and SLAMF1. Interacts with ITCH; the interaction phosphorylates ITCH and negatively regulates its activity. Interacts with FASLG. Interacts with RUNX3. Interacts with KIT. Interacts with EPHA8; possible downstream effector of EPHA8 in regulation of cell adhesion. Interacts with PTK2/FAK1; this interaction leads to PTK2/FAK1 phosphorylation and activation. Interacts with CAV1; this interaction couples integrins to the Ras-ERK pathway. Interacts with UNC119. Interacts (via SH2 domain) with PTPRH (phosphorylated form). Interacts with PTPRO (phosphorylated form). Interacts with PTPRB (phosphorylated form). Interacts with FYB2. Interacts with DSCAM. Interacts with SKAP1 and FYB1; this interaction promotes the phosphorylation of CLNK. Interacts with NEDD9; in the presence of PTK2. Requires Mn(2+) as cofactor. In terms of processing, autophosphorylated at Tyr-420. Phosphorylation on the C-terminal tail at Tyr-531 by CSK maintains the enzyme in an inactive state. PTPRC/CD45 dephosphorylates Tyr-531 leading to activation. Dephosphorylation at Tyr-420 by PTPN2 negatively regulates T-cell receptor signaling. Phosphorylated at tyrosine residues, which can be enhanced by NTN1. Palmitoylated. Palmitoylation at Cys-3 and Cys-6, probably by ZDHHC21, regulates subcellular location. In terms of tissue distribution, detected in spinal cord oligodendrocytes (at protein level).

The protein resides in the cytoplasm. The protein localises to the nucleus. It is found in the cell membrane. Its subcellular location is the perikaryon. It catalyses the reaction L-tyrosyl-[protein] + ATP = O-phospho-L-tyrosyl-[protein] + ADP + H(+). Inhibited by phosphorylation of Tyr-531 by leukocyte common antigen and activated by dephosphorylation of this site. In terms of biological role, non-receptor tyrosine-protein kinase that plays a role in many biological processes including regulation of cell growth and survival, cell adhesion, integrin-mediated signaling, cytoskeletal remodeling, cell motility, immune response and axon guidance. Inactive FYN is phosphorylated on its C-terminal tail within the catalytic domain. Following activation by PKA, the protein subsequently associates with PTK2/FAK1, allowing PTK2/FAK1 phosphorylation, activation and targeting to focal adhesions. Involved in the regulation of cell adhesion and motility through phosphorylation of CTNNB1 (beta-catenin) and CTNND1 (delta-catenin). Regulates cytoskeletal remodeling by phosphorylating several proteins including the actin regulator WAS and the microtubule-associated proteins MAP2 and MAPT. Promotes cell survival by phosphorylating AGAP2/PIKE-A and preventing its apoptotic cleavage. Participates in signal transduction pathways that regulate the integrity of the glomerular slit diaphragm (an essential part of the glomerular filter of the kidney) by phosphorylating several slit diaphragm components including NPHS1, KIRREL1 and TRPC6. Plays a role in neural processes by phosphorylating DPYSL2, a multifunctional adapter protein within the central nervous system, ARHGAP32, a regulator for Rho family GTPases implicated in various neural functions, and SNCA, a small pre-synaptic protein. Involved in reelin signaling by mediating phosphorylation of DAB1 following reelin (RELN)-binding to its receptor. Participates in the downstream signaling pathways that lead to T-cell differentiation and proliferation following T-cell receptor (TCR) stimulation. Phosphorylates PTK2B/PYK2 in response to T-cell receptor activation. Also participates in negative feedback regulation of TCR signaling through phosphorylation of PAG1, thereby promoting interaction between PAG1 and CSK and recruitment of CSK to lipid rafts. CSK maintains LCK and FYN in an inactive form. Promotes CD28-induced phosphorylation of VAV1. In mast cells, phosphorylates CLNK after activation of immunoglobulin epsilon receptor signaling. Can also promote CD244-mediated NK cell activation. This is Tyrosine-protein kinase Fyn from Rattus norvegicus (Rat).